A 148-amino-acid chain; its full sequence is Large ribosomal subunit protein uL22c (148 aa).

This sequence belongs to the universal ribosomal protein uL22 family. As to quaternary structure, part of the 50S ribosomal subunit.

Its subcellular location is the plastid. It localises to the chloroplast. This protein binds specifically to 23S rRNA. Functionally, the globular domain of the protein is located near the polypeptide exit tunnel on the outside of the subunit, while an extended beta-hairpin is found that lines the wall of the exit tunnel in the center of the 70S ribosome. The chain is Large ribosomal subunit protein uL22c (rpl22) from Triticum aestivum (Wheat).